A 138-amino-acid chain; its full sequence is Ribulose bisphosphate carboxylase small subunit (138 aa).

The protein belongs to the RuBisCO small chain family. Heterohexadecamer of 8 large and 8 small subunits.

It is found in the plastid. The protein localises to the chloroplast. Its function is as follows. RuBisCO catalyzes two reactions: the carboxylation of D-ribulose 1,5-bisphosphate, the primary event in carbon dioxide fixation, as well as the oxidative fragmentation of the pentose substrate in the photorespiration process. Both reactions occur simultaneously and in competition at the same active site. Although the small subunit is not catalytic it is essential for maximal activity. This Pyropia katadae (Red alga) protein is Ribulose bisphosphate carboxylase small subunit.